We begin with the raw amino-acid sequence, 1520 residues long: Glutamate synthase [NADPH] large chain (1520 aa).

The active-site For GATase activity is cysteine 22. The Glutamine amidotransferase type-2 domain occupies 22 to 415; it reads CGIGLYAHLK…PGKMLLIDLE (394 aa). Residues 890–913 form a disordered region; that stretch reads GGKSNSGEGGEDPKRFVPDENGDD. Residues 900 to 913 are compositionally biased toward basic and acidic residues; that stretch reads EDPKRFVPDENGDD. Residue 1060-1112 coordinates FMN; sequence LAEAHQTLMLNGLRDRVVLETDGKLMTGRDVVMAALLGAEEFGFATAPLVVLG. [3Fe-4S] cluster-binding residues include cysteine 1113, cysteine 1119, and cysteine 1124.

It belongs to the glutamate synthase family. As to quaternary structure, aggregate of 4 catalytic active heterodimers, consisting of a large and a small subunit. Requires [3Fe-4S] cluster as cofactor. The cofactor is FAD. It depends on FMN as a cofactor.

The enzyme catalyses 2 L-glutamate + NADP(+) = L-glutamine + 2-oxoglutarate + NADPH + H(+). It functions in the pathway amino-acid biosynthesis; L-glutamate biosynthesis via GLT pathway; L-glutamate from 2-oxoglutarate and L-glutamine (NADP(+) route): step 1/1. The protein operates within energy metabolism; nitrogen metabolism. This chain is Glutamate synthase [NADPH] large chain (gltA), found in Bacillus subtilis (strain 168).